The following is a 689-amino-acid chain: uncharacterized protein (689 aa).

S566 provides a ligand contact to substrate. Y579 (proton acceptor) is an active-site residue.

Belongs to the short-chain dehydrogenases/reductases (SDR) family.

This is an uncharacterized protein from Bacillus subtilis (strain 168).